Consider the following 363-residue polypeptide: Spermidine/putrescine import ATP-binding protein PotA 2 (363 aa).

An ABC transporter domain is found at 6–236 (LEIRNVTRRF…PRSRFVADFI (231 aa)). 38-45 (GPSGCGKT) is a binding site for ATP.

This sequence belongs to the ABC transporter superfamily. Spermidine/putrescine importer (TC 3.A.1.11.1) family. As to quaternary structure, the complex is composed of two ATP-binding proteins (PotA), two transmembrane proteins (PotB and PotC) and a solute-binding protein (PotD).

Its subcellular location is the cell inner membrane. It carries out the reaction ATP + H2O + polyamine-[polyamine-binding protein]Side 1 = ADP + phosphate + polyamineSide 2 + [polyamine-binding protein]Side 1.. Its function is as follows. Part of the ABC transporter complex PotABCD involved in spermidine/putrescine import. Responsible for energy coupling to the transport system. The polypeptide is Spermidine/putrescine import ATP-binding protein PotA 2 (Pseudomonas aeruginosa (strain ATCC 15692 / DSM 22644 / CIP 104116 / JCM 14847 / LMG 12228 / 1C / PRS 101 / PAO1)).